A 332-amino-acid chain; its full sequence is Glyceraldehyde-3-phosphate dehydrogenase (332 aa).

Residues 10–11 (RI), Asp32, and Met77 each bind NAD(+). Residues 148-150 (SCT), Thr179, 208-209 (TG), and Arg231 contribute to the D-glyceraldehyde 3-phosphate site. Cys149 (nucleophile) is an active-site residue. Asn313 lines the NAD(+) pocket.

Belongs to the glyceraldehyde-3-phosphate dehydrogenase family. Homotetramer.

Its subcellular location is the cytoplasm. It catalyses the reaction D-glyceraldehyde 3-phosphate + phosphate + NAD(+) = (2R)-3-phospho-glyceroyl phosphate + NADH + H(+). Its pathway is carbohydrate degradation; glycolysis; pyruvate from D-glyceraldehyde 3-phosphate: step 1/5. This chain is Glyceraldehyde-3-phosphate dehydrogenase (GPDA), found in Phytophthora infestans (Potato late blight agent).